The sequence spans 606 residues: Leucine-rich repeat and immunoglobulin-like domain-containing nogo receptor-interacting protein 1 (606 aa).

The N-terminal stretch at 1-27 is a signal peptide; that stretch reads MILQLPSCLCPILLIVVGSILSGSASG. 2 disulfide bridges follow: Cys28/Cys34 and Cys32/Cys43. An LRRNT domain is found at 28-57; that stretch reads CPQRCDCSPQDRSVLCHRKRYLDVPEGIPT. The Extracellular portion of the chain corresponds to 28 to 547; the sequence is CPQRCDCSPQ…FDIKTLIIAT (520 aa). 11 LRR repeats span residues 58–79, 82–103, 106–127, 130–151, 154–175, 178–199, 202–223, 250–271, 274–295, 298–319, and 322–343; these read DTRL…EFSA, YLEE…AFNG, NLRS…VFTG, NLTQ…MFQD, NLKS…AFRG, SLEE…ALSH, GLIT…SFKR, NLTS…AIRH, YLRF…MLYE, RLQE…AFRG, and HLKV…SFHS. Residue Asn130 is glycosylated (N-linked (GlcNAc...) asparagine). Residue Asn188 is glycosylated (N-linked (GlcNAc...) asparagine). Residues Asn250, Asn260, and Asn279 are each glycosylated (N-linked (GlcNAc...) asparagine). Asn327, Asn374, Asn478, Asn491, Asn512, Asn523, and Asn528 each carry an N-linked (GlcNAc...) asparagine glycan. Residues 355–409 enclose the LRRCT domain; it reads NPLACDCRLLWIFRRRWRLNFSRQQPSCSSPEYVQGKEFKDFPDVLQPNYFTCRR. Intrachain disulfides connect Cys359/Cys382, Cys361/Cys407, and Cys432/Cys483. One can recognise an Ig-like C2-type domain in the interval 397 to 496; that stretch reads PDVLQPNYFT…NAGGNDTSLA (100 aa). Residues 548–568 form a helical membrane-spanning segment; that stretch reads TMGFISFLGVVLFCLVLLFLW. The Cytoplasmic segment spans residues 569–606; sequence SRGKGNTKHNIEIEYVPRKSDAGLSSADAPRKFNMKMI.

The protein resides in the cell membrane. May play a role in regulating axonal regeneration and plasticity in the adult central nervous system. This chain is Leucine-rich repeat and immunoglobulin-like domain-containing nogo receptor-interacting protein 1 (lingo1), found in Xenopus tropicalis (Western clawed frog).